We begin with the raw amino-acid sequence, 159 residues long: Transcriptional repressor NrdR (159 aa).

The span at 1–11 shows a compositional bias: polar residues; sequence MQCPSCQNTDS. The disordered stretch occupies residues 1–20; the sequence is MQCPSCQNTDSRVLESRSAD. A zinc finger lies at 3–34; that stretch reads CPSCQNTDSRVLESRSADSGRSVRRRRECLNC. In terms of domain architecture, ATP-cone spans 49–139; it reads INVLKRSGAK…VYRQFNGIND (91 aa).

Belongs to the NrdR family. Requires Zn(2+) as cofactor.

Functionally, negatively regulates transcription of bacterial ribonucleotide reductase nrd genes and operons by binding to NrdR-boxes. This chain is Transcriptional repressor NrdR, found in Prochlorococcus marinus (strain NATL1A).